The sequence spans 209 residues: Ancillary SecYEG translocon subunit (209 aa).

Residues 1–23 lie on the Cytoplasmic side of the membrane; the sequence is MAAHLEEQQELDNFKYFWKTTGK. Residues 24-42 traverse the membrane as a helical segment; it reads WLFALLILAALGYLGYTVY. At 43–209 the chain is on the periplasmic side; that stretch reads QNRAASQNQE…LLQMKLDSLK (167 aa). One copy of the TPR repeat lies at 161-194; sequence PLLMETKGDVYAAQEKSQEALKNYGQALEKMPQD.

It belongs to the YfgM family. Interacts with the SecYEG translocon. Forms a complex with PpiD.

It localises to the cell inner membrane. Its function is as follows. May mediate protein transfer from the SecYEG translocon to the periplasmic chaperone network via its periplasmic C-terminal region. The chain is Ancillary SecYEG translocon subunit from Neisseria gonorrhoeae (strain ATCC 700825 / FA 1090).